We begin with the raw amino-acid sequence, 160 residues long: Cyclic pyranopterin monophosphate synthase (160 aa).

Residues 76 to 78 (MCH) and 113 to 114 (ME) each bind substrate. Residue Asp-128 is part of the active site.

Belongs to the MoaC family. In terms of assembly, homohexamer; trimer of dimers.

The enzyme catalyses (8S)-3',8-cyclo-7,8-dihydroguanosine 5'-triphosphate = cyclic pyranopterin phosphate + diphosphate. The protein operates within cofactor biosynthesis; molybdopterin biosynthesis. Catalyzes the conversion of (8S)-3',8-cyclo-7,8-dihydroguanosine 5'-triphosphate to cyclic pyranopterin monophosphate (cPMP). The chain is Cyclic pyranopterin monophosphate synthase from Brevibacillus brevis (strain 47 / JCM 6285 / NBRC 100599).